The chain runs to 88 residues: Small ribosomal subunit protein bS20 (88 aa).

The protein belongs to the bacterial ribosomal protein bS20 family.

Functionally, binds directly to 16S ribosomal RNA. The chain is Small ribosomal subunit protein bS20 from Oenococcus oeni (strain ATCC BAA-331 / PSU-1).